The chain runs to 462 residues: tRNA modification GTPase MnmE (462 aa).

(6S)-5-formyl-5,6,7,8-tetrahydrofolate is bound by residues arginine 23, glutamate 88, and arginine 127. In terms of domain architecture, TrmE-type G spans 224 to 383; that stretch reads GLATVIIGRP…LEKAIADLFF (160 aa). Residue asparagine 234 participates in K(+) binding. GTP is bound by residues 234 to 239, 253 to 259, and 278 to 281; these read NVGKSS, TDIPGTT, and DTAG. Mg(2+) is bound at residue serine 238. K(+)-binding residues include threonine 253, isoleucine 255, and threonine 258. A Mg(2+)-binding site is contributed by threonine 259. Position 462 (lysine 462) interacts with (6S)-5-formyl-5,6,7,8-tetrahydrofolate.

This sequence belongs to the TRAFAC class TrmE-Era-EngA-EngB-Septin-like GTPase superfamily. TrmE GTPase family. In terms of assembly, homodimer. Heterotetramer of two MnmE and two MnmG subunits. It depends on K(+) as a cofactor.

The protein localises to the cytoplasm. Exhibits a very high intrinsic GTPase hydrolysis rate. Involved in the addition of a carboxymethylaminomethyl (cmnm) group at the wobble position (U34) of certain tRNAs, forming tRNA-cmnm(5)s(2)U34. The polypeptide is tRNA modification GTPase MnmE (Geobacillus kaustophilus (strain HTA426)).